The primary structure comprises 374 residues: MLTAFRPNSPTAIVVRAASTNAKKLEEIRERLAKGPNFQDFVQNPDNLKSVGENYDGKLRREKGEEQRLRLPPWLKTTIPMGKNYTKIKEQLRELKLSTVCEEARCPNIGECWGGGENGTQTATIMLMGDTCTRGCRFCSVKTARIPPPLDENEPVNTAKAIASWGLDYIVLTSVDRDDLPDGGSKHIAQTVREIKARNSNIFVECLVPDFRGDLDCVETIANCGLDVYAHNIETVEKLTPYVRDRRAHYRQTLRVLTEAKRFNPNLITKSSIMLGLGETDEEIERTMTDLREAGVECLTLGQYMQPTNKHLKVIEYVTPEKFKHWEERGNDLGFLYTASGPLVRSSYKAGEFFISSILANRKANQSKDSAPKN.

[4Fe-4S] cluster is bound by residues C101, C106, C112, C132, C136, C139, and S347. The Radical SAM core domain maps to 117-336 (ENGTQTATIM…EERGNDLGFL (220 aa)).

The protein belongs to the radical SAM superfamily. Lipoyl synthase family. It depends on [4Fe-4S] cluster as a cofactor.

The protein localises to the mitochondrion. The catalysed reaction is [[Fe-S] cluster scaffold protein carrying a second [4Fe-4S](2+) cluster] + N(6)-octanoyl-L-lysyl-[protein] + 2 oxidized [2Fe-2S]-[ferredoxin] + 2 S-adenosyl-L-methionine + 4 H(+) = [[Fe-S] cluster scaffold protein] + N(6)-[(R)-dihydrolipoyl]-L-lysyl-[protein] + 4 Fe(3+) + 2 hydrogen sulfide + 2 5'-deoxyadenosine + 2 L-methionine + 2 reduced [2Fe-2S]-[ferredoxin]. The protein operates within protein modification; protein lipoylation via endogenous pathway; protein N(6)-(lipoyl)lysine from octanoyl-[acyl-carrier-protein]: step 2/2. In terms of biological role, catalyzes the radical-mediated insertion of two sulfur atoms into the C-6 and C-8 positions of the octanoyl moiety bound to the lipoyl domains of lipoate-dependent enzymes, thereby converting the octanoylated domains into lipoylated derivatives. This is Lipoyl synthase, mitochondrial from Drosophila pseudoobscura pseudoobscura (Fruit fly).